Here is a 153-residue protein sequence, read N- to C-terminus: MYAVVQVRGVVKTNHEIKDTLKMLRLHHVNHCVLVPDTPAYLGMIRKVKDFVAYGEVDKDTLATLLRTRGRLTGDEKLTDEYVRAHTPYADIDEFAAALCDGEMSFRDLVEIKPVLRLHPPRKGYKTIKRTFQQGGALGYYGPQINDLLYKMR.

This sequence belongs to the universal ribosomal protein uL30 family. In terms of assembly, part of the 50S ribosomal subunit.

This Methanoculleus marisnigri (strain ATCC 35101 / DSM 1498 / JR1) protein is Large ribosomal subunit protein uL30.